The sequence spans 441 residues: Ribulose bisphosphate carboxylase large chain (441 aa).

Asn89 and Thr139 together coordinate substrate. The active-site Proton acceptor is Lys141. Residue Lys143 coordinates substrate. Positions 167, 169, and 170 each coordinate Mg(2+). An N6-carboxylysine modification is found at Lys167. His260 serves as the catalytic Proton acceptor. Substrate contacts are provided by Xaa261 and Ser345.

The protein belongs to the RuBisCO large chain family. Type I subfamily. As to quaternary structure, heterohexadecamer of 8 large chains and 8 small chains; disulfide-linked. The disulfide link is formed within the large subunit homodimers. Mg(2+) serves as cofactor. Post-translationally, the disulfide bond which can form in the large chain dimeric partners within the hexadecamer appears to be associated with oxidative stress and protein turnover.

It is found in the plastid. The protein resides in the chloroplast. It catalyses the reaction 2 (2R)-3-phosphoglycerate + 2 H(+) = D-ribulose 1,5-bisphosphate + CO2 + H2O. The catalysed reaction is D-ribulose 1,5-bisphosphate + O2 = 2-phosphoglycolate + (2R)-3-phosphoglycerate + 2 H(+). In terms of biological role, ruBisCO catalyzes two reactions: the carboxylation of D-ribulose 1,5-bisphosphate, the primary event in carbon dioxide fixation, as well as the oxidative fragmentation of the pentose substrate in the photorespiration process. Both reactions occur simultaneously and in competition at the same active site. The sequence is that of Ribulose bisphosphate carboxylase large chain from Asclepias exaltata (Poke milkweed).